Consider the following 126-residue polypeptide: Phosphoribosyl-AMP cyclohydrolase (126 aa).

Residue Asp-76 participates in Mg(2+) binding. A Zn(2+)-binding site is contributed by Cys-77. Residues Asp-78 and Asp-80 each coordinate Mg(2+). Residues Cys-94 and Cys-101 each contribute to the Zn(2+) site.

It belongs to the PRA-CH family. Homodimer. Mg(2+) is required as a cofactor. Zn(2+) serves as cofactor.

It is found in the cytoplasm. It catalyses the reaction 1-(5-phospho-beta-D-ribosyl)-5'-AMP + H2O = 1-(5-phospho-beta-D-ribosyl)-5-[(5-phospho-beta-D-ribosylamino)methylideneamino]imidazole-4-carboxamide. The protein operates within amino-acid biosynthesis; L-histidine biosynthesis; L-histidine from 5-phospho-alpha-D-ribose 1-diphosphate: step 3/9. In terms of biological role, catalyzes the hydrolysis of the adenine ring of phosphoribosyl-AMP. This is Phosphoribosyl-AMP cyclohydrolase from Nitratidesulfovibrio vulgaris (strain ATCC 29579 / DSM 644 / CCUG 34227 / NCIMB 8303 / VKM B-1760 / Hildenborough) (Desulfovibrio vulgaris).